The primary structure comprises 234 residues: Large ribosomal subunit protein uL1 (234 aa).

Belongs to the universal ribosomal protein uL1 family. Part of the 50S ribosomal subunit.

In terms of biological role, binds directly to 23S rRNA. The L1 stalk is quite mobile in the ribosome, and is involved in E site tRNA release. Functionally, protein L1 is also a translational repressor protein, it controls the translation of the L11 operon by binding to its mRNA. The protein is Large ribosomal subunit protein uL1 of Pectobacterium carotovorum subsp. carotovorum (strain PC1).